The following is a 172-amino-acid chain: 3-hydroxydecanoyl-[acyl-carrier-protein] dehydratase (172 aa).

H71 is a catalytic residue.

It belongs to the thioester dehydratase family. FabA subfamily. In terms of assembly, homodimer.

It is found in the cytoplasm. It catalyses the reaction a (3R)-hydroxyacyl-[ACP] = a (2E)-enoyl-[ACP] + H2O. The enzyme catalyses (3R)-hydroxydecanoyl-[ACP] = (2E)-decenoyl-[ACP] + H2O. It carries out the reaction (2E)-decenoyl-[ACP] = (3Z)-decenoyl-[ACP]. It functions in the pathway lipid metabolism; fatty acid biosynthesis. Functionally, necessary for the introduction of cis unsaturation into fatty acids. Catalyzes the dehydration of (3R)-3-hydroxydecanoyl-ACP to E-(2)-decenoyl-ACP and then its isomerization to Z-(3)-decenoyl-ACP. Can catalyze the dehydratase reaction for beta-hydroxyacyl-ACPs with saturated chain lengths up to 16:0, being most active on intermediate chain length. This Sodalis glossinidius (strain morsitans) protein is 3-hydroxydecanoyl-[acyl-carrier-protein] dehydratase.